The primary structure comprises 390 residues: Aspartate carbamoyltransferase, chloroplastic (390 aa).

Residues 1-68 (MSIASSLTSA…NLTRNVGPVR (68 aa)) constitute a chloroplast transit peptide. Residues Arg-136 and Thr-137 each contribute to the carbamoyl phosphate site. Arg-136 and Thr-137 together coordinate UMP. Lys-166 is an L-aspartate binding site. Arg-187, His-215, and Gln-218 together coordinate carbamoyl phosphate. UMP contacts are provided by Arg-187 and His-215. Positions 248 and 310 each coordinate UMP. Residues Arg-248 and Arg-310 each coordinate L-aspartate. Residues Leu-350 and Pro-351 each contribute to the carbamoyl phosphate site.

It belongs to the aspartate/ornithine carbamoyltransferase superfamily. ATCase family. As to quaternary structure, homotrimer.

It is found in the plastid. Its subcellular location is the chloroplast. The catalysed reaction is carbamoyl phosphate + L-aspartate = N-carbamoyl-L-aspartate + phosphate + H(+). Its pathway is pyrimidine metabolism; UMP biosynthesis via de novo pathway; (S)-dihydroorotate from bicarbonate: step 2/3. Feedback inhibited by UMP. In terms of biological role, catalyzes the condensation of carbamoyl phosphate and aspartate to form carbamoyl aspartate and inorganic phosphate, the committed step in the de novo pyrimidine nucleotide biosynthesis pathway. This is Aspartate carbamoyltransferase, chloroplastic (PYRB) from Arabidopsis thaliana (Mouse-ear cress).